Here is a 319-residue protein sequence, read N- to C-terminus: Protein SODIUM POTASSIUM ROOT DEFECTIVE 1 (319 aa).

Residues 1–13 (MLCASQASTTTLC) are compositionally biased toward polar residues. 2 disordered regions span residues 1–113 (MLCA…TPQG) and 191–248 (SPDN…NSSS). A compositionally biased stretch (low complexity) spans 14-27 (STMDQTSQPSSSSS). Positions 36-49 (AIDRHNPIIRDGRR) are enriched in basic and acidic residues. A compositionally biased stretch (low complexity) spans 58–67 (LNPSSSSSST). 2 stretches are compositionally biased toward polar residues: residues 104 to 113 (SCFSSDTPQG) and 200 to 210 (TKASPTASLSS). Pro residues predominate over residues 224–242 (SPPPPPPPSPPQSSPPSPP). An HMA domain is found at 249–315 (DQVVVLRVSL…KVKNAQFWPE (67 aa)). Residues C260 and C263 each contribute to the Zn(2+) site.

In terms of assembly, interacts with FT, but not with TSF (TWIN SISTER OF FT). In terms of tissue distribution, expressed in vascular tissues of cotyledons, rosette leaves and roots in developing seedlings before and during the floral transition. Expressed specifically in the phloem companion cells. Not detected in embryos or seeds. Not detected in the vegetative shoot apex.

The protein resides in the cytoplasm. It is found in the nucleus. The protein localises to the endoplasmic reticulum. In terms of biological role, required for root meristem maintenance after germination. Involved in phloem translocation, starch accumulation and flowering. Promotes flowering in the photoperiod pathway. Regulates long-distance movement of FT from leaves to the shoot apex through the phloem stream. This is Protein SODIUM POTASSIUM ROOT DEFECTIVE 1 from Arabidopsis thaliana (Mouse-ear cress).